The following is a 346-amino-acid chain: Sensor protein kinase GraS (346 aa).

2 helical membrane-spanning segments follow: residues 15–35 (MNWI…SLID) and 43–63 (LFYI…LTYF). The 207-residue stretch at 126–332 (EFVHDIKTPV…TVRLIFPLQN (207 aa)) folds into the Histidine kinase domain.

As to quaternary structure, interacts with GraX.

Its subcellular location is the cell membrane. It catalyses the reaction ATP + protein L-histidine = ADP + protein N-phospho-L-histidine.. Its function is as follows. Member of the two-component regulatory system GraR/GraS involved in resistance against cationic antimicrobial peptides (CAMPs). Functions as a sensor protein kinase which phosphorylates GraR through the auxiliary protein GraX. In turn, GraR up-regulates many genes such as adhesins, exoproteins, transporters, toxins, and proteins involved in cell wall synthesis. Down-regulates the expression of many genes involved in RNA and amino acid synthesis or glycolysis. The sequence is that of Sensor protein kinase GraS (graS) from Staphylococcus aureus (strain MSSA476).